Reading from the N-terminus, the 614-residue chain is Phosphomethylpyrimidine synthase (614 aa).

Low complexity predominate over residues 1–16 (MNAQLSALQQQAQQLS). The segment at 1–36 (MNAQLSALQQQAQQLSESVTRPIPGSRKIHVPGSRP) is disordered. Substrate contacts are provided by residues Asn230, Met259, Tyr288, His324, 344–346 (SRG), 385–388 (DGLR), and Glu424. Residue His428 coordinates Zn(2+). Residue Tyr451 coordinates substrate. His492 lines the Zn(2+) pocket. [4Fe-4S] cluster-binding residues include Cys572, Cys575, and Cys580.

This sequence belongs to the ThiC family. In terms of assembly, homodimer. The cofactor is [4Fe-4S] cluster.

The enzyme catalyses 5-amino-1-(5-phospho-beta-D-ribosyl)imidazole + S-adenosyl-L-methionine = 4-amino-2-methyl-5-(phosphooxymethyl)pyrimidine + CO + 5'-deoxyadenosine + formate + L-methionine + 3 H(+). It participates in cofactor biosynthesis; thiamine diphosphate biosynthesis. Its function is as follows. Catalyzes the synthesis of the hydroxymethylpyrimidine phosphate (HMP-P) moiety of thiamine from aminoimidazole ribotide (AIR) in a radical S-adenosyl-L-methionine (SAM)-dependent reaction. This is Phosphomethylpyrimidine synthase from Stenotrophomonas maltophilia (strain R551-3).